A 266-amino-acid polypeptide reads, in one-letter code: Interleukin-1 beta (266 aa).

Positions M1 to D113 are excised as a propeptide.

This sequence belongs to the IL-1 family. Monomer. In its precursor form, weakly interacts with full-length MEFV; the mature cytokine does not interact at all. Interacts with integrins ITGAV:ITGBV and ITGA5:ITGB1; integrin-binding is required for IL1B signaling. Interacts with cargo receptor TMED10; the interaction is direct and is required for the secretion of IL1B mature form. Interacts with HSP90AB1; the interaction facilitates cargo translocation into the ERGIC. Interacts with HSP90B1; the interaction facilitates cargo translocation into the ERGIC.

Its subcellular location is the cytoplasm. The protein localises to the cytosol. The protein resides in the secreted. It is found in the lysosome. It localises to the extracellular exosome. Functionally, potent pro-inflammatory cytokine. Initially discovered as the major endogenous pyrogen, induces prostaglandin synthesis, neutrophil influx and activation, T-cell activation and cytokine production, B-cell activation and antibody production, and fibroblast proliferation and collagen production. Promotes Th17 differentiation of T-cells. Synergizes with IL12/interleukin-12 to induce IFNG synthesis from T-helper 1 (Th1) cells. Plays a role in angiogenesis by inducing VEGF production synergistically with TNF and IL6. Involved in transduction of inflammation downstream of pyroptosis: its mature form is specifically released in the extracellular milieu by passing through the gasdermin-D (GSDMD) pore. In Capra hircus (Goat), this protein is Interleukin-1 beta (IL1B).